A 617-amino-acid chain; its full sequence is Proline--tRNA ligase (617 aa).

The protein belongs to the class-II aminoacyl-tRNA synthetase family. ProS type 1 subfamily. In terms of assembly, homodimer.

The protein resides in the cytoplasm. The enzyme catalyses tRNA(Pro) + L-proline + ATP = L-prolyl-tRNA(Pro) + AMP + diphosphate. Its function is as follows. Catalyzes the attachment of proline to tRNA(Pro) in a two-step reaction: proline is first activated by ATP to form Pro-AMP and then transferred to the acceptor end of tRNA(Pro). As ProRS can inadvertently accommodate and process non-cognate amino acids such as alanine and cysteine, to avoid such errors it has two additional distinct editing activities against alanine. One activity is designated as 'pretransfer' editing and involves the tRNA(Pro)-independent hydrolysis of activated Ala-AMP. The other activity is designated 'posttransfer' editing and involves deacylation of mischarged Ala-tRNA(Pro). The misacylated Cys-tRNA(Pro) is not edited by ProRS. This is Proline--tRNA ligase from Streptococcus pneumoniae (strain 70585).